Consider the following 206-residue polypeptide: Putative NAD(P)H nitroreductase MhqN (206 aa).

FMN is bound by residues 11–13 (RRS), 68–70 (QYK), 157–158 (IG), Arg-193, and Arg-196.

The protein belongs to the nitroreductase family. As to quaternary structure, homodimer. It depends on FMN as a cofactor.

The protein resides in the cytoplasm. Functionally, putative nitroreductase that may contribute to the degradation of aromatic compounds. This chain is Putative NAD(P)H nitroreductase MhqN (mhqN), found in Bacillus subtilis (strain 168).